Consider the following 294-residue polypeptide: 4-hydroxybenzoate octaprenyltransferase (294 aa).

Helical transmembrane passes span 24-44 (IGILLLMWPTLWALWLAADGF), 47-67 (LHLIVIFALGTVLMRSAGCVI), 99-119 (LLAAGLSLVSFVLILPLDPLV), 139-159 (FLAIPQAYLGIAFGFGIPMGF), 164-184 (GEVPAIAWLLLLANIFWAVAY), 213-233 (VAAVMLCYAVAFGLIAAVGIA), 238-258 (PWFFGGIAIAAAIAIYHYTLI), and 274-294 (NWVGAVLFVALVIDYVAFPAA).

It belongs to the UbiA prenyltransferase family. Mg(2+) is required as a cofactor.

The protein localises to the cell inner membrane. The enzyme catalyses all-trans-octaprenyl diphosphate + 4-hydroxybenzoate = 4-hydroxy-3-(all-trans-octaprenyl)benzoate + diphosphate. The protein operates within cofactor biosynthesis; ubiquinone biosynthesis. Functionally, catalyzes the prenylation of para-hydroxybenzoate (PHB) with an all-trans polyprenyl group. Mediates the second step in the final reaction sequence of ubiquinone-8 (UQ-8) biosynthesis, which is the condensation of the polyisoprenoid side chain with PHB, generating the first membrane-bound Q intermediate 3-octaprenyl-4-hydroxybenzoate. The polypeptide is 4-hydroxybenzoate octaprenyltransferase (Aromatoleum aromaticum (strain DSM 19018 / LMG 30748 / EbN1) (Azoarcus sp. (strain EbN1))).